We begin with the raw amino-acid sequence, 70 residues long: Gas vesicle protein A (70 aa).

This sequence belongs to the gas vesicle GvpA family. The gas vesicle shell is 2 nm thick and consists of a single layer of this protein. It forms helical ribs nearly perpendicular to the long axis of the vesicle.

The protein resides in the gas vesicle shell. Functionally, gas vesicles are hollow, gas filled proteinaceous nanostructures found in some microorganisms. During planktonic growth they allow positioning of the organism at a favorable depth for light or nutrient acquisition. GvpA forms the protein shell. The polypeptide is Gas vesicle protein A (Bradyrhizobium sp. (strain ORS 278)).